Reading from the N-terminus, the 122-residue chain is Holo-[acyl-carrier-protein] synthase (122 aa).

Mg(2+) contacts are provided by Asp-9 and Glu-58.

It belongs to the P-Pant transferase superfamily. AcpS family. Requires Mg(2+) as cofactor.

The protein localises to the cytoplasm. The catalysed reaction is apo-[ACP] + CoA = holo-[ACP] + adenosine 3',5'-bisphosphate + H(+). In terms of biological role, transfers the 4'-phosphopantetheine moiety from coenzyme A to a Ser of acyl-carrier-protein. This is Holo-[acyl-carrier-protein] synthase from Chlamydia felis (strain Fe/C-56) (Chlamydophila felis).